The chain runs to 373 residues: tRNA-specific 2-thiouridylase MnmA (373 aa).

ATP-binding positions include 12–19 (GMSGGVDS) and M38. The interval 98–100 (NPD) is interaction with target base in tRNA. C103 acts as the Nucleophile in catalysis. C103 and C200 are oxidised to a cystine. Residue G127 participates in ATP binding. An interaction with tRNA region spans residues 150–152 (KDQ). C200 (cysteine persulfide intermediate) is an active-site residue. The tract at residues 312 to 313 (RY) is interaction with tRNA.

This sequence belongs to the MnmA/TRMU family.

Its subcellular location is the cytoplasm. It catalyses the reaction S-sulfanyl-L-cysteinyl-[protein] + uridine(34) in tRNA + AH2 + ATP = 2-thiouridine(34) in tRNA + L-cysteinyl-[protein] + A + AMP + diphosphate + H(+). Functionally, catalyzes the 2-thiolation of uridine at the wobble position (U34) of tRNA, leading to the formation of s(2)U34. The polypeptide is tRNA-specific 2-thiouridylase MnmA (Streptococcus pneumoniae (strain JJA)).